A 341-amino-acid chain; its full sequence is tRNA N6-adenosine threonylcarbamoyltransferase (341 aa).

Residues histidine 111 and histidine 115 each coordinate Fe cation. Substrate is bound by residues 134 to 138 (LVSGG), aspartate 167, glycine 180, and asparagine 276. Aspartate 304 contacts Fe cation.

The protein belongs to the KAE1 / TsaD family. Fe(2+) serves as cofactor.

It localises to the cytoplasm. It catalyses the reaction L-threonylcarbamoyladenylate + adenosine(37) in tRNA = N(6)-L-threonylcarbamoyladenosine(37) in tRNA + AMP + H(+). Functionally, required for the formation of a threonylcarbamoyl group on adenosine at position 37 (t(6)A37) in tRNAs that read codons beginning with adenine. Is involved in the transfer of the threonylcarbamoyl moiety of threonylcarbamoyl-AMP (TC-AMP) to the N6 group of A37, together with TsaE and TsaB. TsaD likely plays a direct catalytic role in this reaction. This is tRNA N6-adenosine threonylcarbamoyltransferase from Pseudomonas paraeruginosa (strain DSM 24068 / PA7) (Pseudomonas aeruginosa (strain PA7)).